Reading from the N-terminus, the 364-residue chain is Aminomethyltransferase (364 aa).

This sequence belongs to the GcvT family. As to quaternary structure, the glycine cleavage system is composed of four proteins: P, T, L and H.

It carries out the reaction N(6)-[(R)-S(8)-aminomethyldihydrolipoyl]-L-lysyl-[protein] + (6S)-5,6,7,8-tetrahydrofolate = N(6)-[(R)-dihydrolipoyl]-L-lysyl-[protein] + (6R)-5,10-methylene-5,6,7,8-tetrahydrofolate + NH4(+). Its function is as follows. The glycine cleavage system catalyzes the degradation of glycine. The protein is Aminomethyltransferase of Shewanella sp. (strain ANA-3).